The chain runs to 301 residues: Putative carboxypeptidase slr1534 (301 aa).

Residue Ser-116 is the Nucleophile of the active site. Active-site charge relay system residues include Glu-206 and His-276.

Belongs to the peptidase S66 family.

This Synechocystis sp. (strain ATCC 27184 / PCC 6803 / Kazusa) protein is Putative carboxypeptidase slr1534.